The primary structure comprises 171 residues: S-ribosylhomocysteine lyase (171 aa).

The Fe cation site is built by histidine 54, histidine 58, and cysteine 128.

Belongs to the LuxS family. As to quaternary structure, homodimer. The cofactor is Fe cation.

The catalysed reaction is S-(5-deoxy-D-ribos-5-yl)-L-homocysteine = (S)-4,5-dihydroxypentane-2,3-dione + L-homocysteine. Its function is as follows. Involved in the synthesis of autoinducer 2 (AI-2) which is secreted by bacteria and is used to communicate both the cell density and the metabolic potential of the environment. The regulation of gene expression in response to changes in cell density is called quorum sensing. Catalyzes the transformation of S-ribosylhomocysteine (RHC) to homocysteine (HC) and 4,5-dihydroxy-2,3-pentadione (DPD). The chain is S-ribosylhomocysteine lyase from Edwardsiella ictaluri (strain 93-146).